The sequence spans 115 residues: Galanin-like peptide (115 aa).

An N-terminal signal peptide occupies residues 1 to 23; that stretch reads MAPSVPLVLLLVLLLSLAETPAS. Positions 86–115 are excised as a propeptide; sequence NVMEAFAKPEIGDLDVLSKKIPKEEDVLKS.

Belongs to the galanin family. As to expression, hypothalamus and pituitary gland.

It is found in the secreted. Functionally, hypothalamic neuropeptide which binds to the G-protein-coupled galanin receptors (GALR1, GALR2 and GALR3). Involved in a large number of putative physiological functions in CNS homeostatic processes, including the regulation of gonadotropin-releasing hormone secretion. Exhibits potent and dose-dependent vasoconstrictor and anti-edema activity in the cutaneous microvasculature, a physiologic effects which does not appear to be mediated via GALR1 or GALR2. Exhibits antimicrobial activity against Gram-negative bacterias, inducing bacterial membrane blebbing. The protein is Galanin-like peptide (GALP) of Macaca nemestrina (Pig-tailed macaque).